The primary structure comprises 278 residues: MVRVIAVSNPRLAQAFVDYMTTQGIELRVHNTGEAAEIWLADDSHLEQVQHELQQFLIDPLNSRYRAASWQAGNTDADLHYQGFSYLQTLRSKAGPLTLGVMALCIVVYILMQILGDDTLMYWLSWPQDSSQYLQLWRWVSHAFLHFSLLHITFNLLWWWYLGGPLEKRLGSGKLFVLAVVSAFFSGWAQSLFSGALFGGLSGVVYALMGYCWLSGERAPERGLMLPRGLMVFSVLWLVAGYFDILGMSIANAAHVAGLVLGLLMAFWDTRHRAHNEQ.

The next 6 helical transmembrane spans lie at 95-115, 143-163, 170-190, 192-212, 224-241, and 245-267; these read GPLTLGVMALCIVVYILMQIL, AFLHFSLLHITFNLLWWWYLG, LGSGKLFVLAVVSAFFSGWAQ, LFSGALFGGLSGVVYALMGYC, LMLPRGLMVFSVLWLVAG, and ILGMSIANAAHVAGLVLGLLMAF. Ser-202 functions as the Nucleophile in the catalytic mechanism. His-255 is an active-site residue.

The protein belongs to the peptidase S54 family.

The protein resides in the cell inner membrane. The enzyme catalyses Cleaves type-1 transmembrane domains using a catalytic dyad composed of serine and histidine that are contributed by different transmembrane domains.. Its function is as follows. Rhomboid-type serine protease that catalyzes intramembrane proteolysis. This chain is Rhomboid protease GlpG, found in Serratia proteamaculans (strain 568).